A 338-amino-acid chain; its full sequence is Uroporphyrinogen decarboxylase (338 aa).

Substrate is bound by residues 27-31 (RQAGR), aspartate 77, tyrosine 151, serine 203, and histidine 317.

The protein belongs to the uroporphyrinogen decarboxylase family. Homodimer.

The protein resides in the cytoplasm. It catalyses the reaction uroporphyrinogen III + 4 H(+) = coproporphyrinogen III + 4 CO2. It functions in the pathway porphyrin-containing compound metabolism; protoporphyrin-IX biosynthesis; coproporphyrinogen-III from 5-aminolevulinate: step 4/4. In terms of biological role, catalyzes the decarboxylation of four acetate groups of uroporphyrinogen-III to yield coproporphyrinogen-III. This Wolbachia sp. subsp. Drosophila simulans (strain wRi) protein is Uroporphyrinogen decarboxylase.